The following is a 389-amino-acid chain: Formate-dependent phosphoribosylglycinamide formyltransferase (389 aa).

N(1)-(5-phospho-beta-D-ribosyl)glycinamide is bound by residues 12–13 (EL) and Glu-72. ATP is bound by residues Arg-104, Lys-145, 150–155 (SSGKGQ), 185–188 (EAFV), and Glu-193. In terms of domain architecture, ATP-grasp spans 109–300 (DLASKELGLR…EFELHARAVL (192 aa)). Mg(2+)-binding residues include Glu-258 and Glu-270. Residues Asp-277, Lys-348, and 355–356 (RR) contribute to the N(1)-(5-phospho-beta-D-ribosyl)glycinamide site.

This sequence belongs to the PurK/PurT family. Homodimer.

It carries out the reaction N(1)-(5-phospho-beta-D-ribosyl)glycinamide + formate + ATP = N(2)-formyl-N(1)-(5-phospho-beta-D-ribosyl)glycinamide + ADP + phosphate + H(+). The protein operates within purine metabolism; IMP biosynthesis via de novo pathway; N(2)-formyl-N(1)-(5-phospho-D-ribosyl)glycinamide from N(1)-(5-phospho-D-ribosyl)glycinamide (formate route): step 1/1. Its function is as follows. Involved in the de novo purine biosynthesis. Catalyzes the transfer of formate to 5-phospho-ribosyl-glycinamide (GAR), producing 5-phospho-ribosyl-N-formylglycinamide (FGAR). Formate is provided by PurU via hydrolysis of 10-formyl-tetrahydrofolate. In Chlorobium phaeobacteroides (strain DSM 266 / SMG 266 / 2430), this protein is Formate-dependent phosphoribosylglycinamide formyltransferase.